We begin with the raw amino-acid sequence, 263 residues long: Neurogenin-2 (263 aa).

The disordered stretch occupies residues 20-76; the sequence is LGSASPASATLTPMSSSADEEEDEELRRPGSARGQRGAEAEQGVQGSPASGAGGCRP. The segment covering 24-36 has biased composition (polar residues); the sequence is SPASATLTPMSSS. One can recognise a bHLH domain in the interval 112-164; that stretch reads TRRLKANNRERNRMHNLNAALDALREVLPTFPEDAKLTKIETLRFAHNYIWAL. The span at 197–231 shows a compositional bias: low complexity; sequence LGASGDSPSPPSSWSCTNSPASSSNSTSPYSCTLS. The disordered stretch occupies residues 197–253; sequence LGASGDSPSPPSSWSCTNSPASSSNSTSPYSCTLSPASPGSDVDYWQPPPPEKHRYA.

As to quaternary structure, efficient DNA binding requires dimerization with another bHLH protein.

It is found in the nucleus. Functionally, transcriptional regulator. Involved in neuronal differentiation. Activates transcription by binding to the E box (5'-CANNTG-3'). The sequence is that of Neurogenin-2 (Neurog2) from Mus musculus (Mouse).